A 102-amino-acid chain; its full sequence is Polymeric immunoglobulin receptor (102 aa).

As to quaternary structure, interacts (mainly via CDR1-like domain) with dimeric IgA. Interacts (mainly via CDR2-like domain) with pentameric IgM. Either free or part of the secretory IgA (sIgA) complex that consists of two, four or five IgA monomers, and two additional non-Ig polypeptides, namely the JCHAIN and the secretory component (the proteolytic product of PIGR). Free secretory component interacts with bacterial antigens toxA of C.difficile and eaeA of E.coli. Post-translationally, N-glycosylated. N-glycosylation is required for anchoring IgA molecules to mucus, but is not necessary for Ig binding.

Its subcellular location is the cell membrane. It localises to the secreted. In terms of biological role, mediates selective transcytosis of polymeric IgA and IgM across mucosal epithelial cells. Binds polymeric IgA and IgM at the basolateral surface of epithelial cells. The complex is then transported across the cell to be secreted at the apical surface. During this process, a cleavage occurs that separates the extracellular (known as the secretory component) from the transmembrane segment. Through its N-linked glycans ensures anchoring of secretory IgA (sIgA) molecules to mucus lining the epithelial surface to neutralize extracellular pathogens. On its own (free form) may act as a non-specific microbial scavenger to prevent pathogen interaction with epithelial cells. The sequence is that of Polymeric immunoglobulin receptor (PIGR) from Sus scrofa (Pig).